The chain runs to 449 residues: Probable glycosyltransferase 5 (449 aa).

The segment covering 1 to 14 (MMEKHGGKVTSDRR) has biased composition (basic and acidic residues). A disordered region spans residues 1 to 24 (MMEKHGGKVTSDRRAGRRQHGQRC). Topologically, residues 1–28 (MMEKHGGKVTSDRRAGRRQHGQRCSASD) are cytoplasmic. A helical; Signal-anchor for type II membrane protein transmembrane segment spans residues 29-49 (AAPLVVVVILIVGALFLILGP). The Lumenal segment spans residues 50 to 449 (TGSSSFTVPR…HPTFRAARPT (400 aa)). Positions 74-109 (APPPPPPPAQMQAGANASSEEDSGLPPPRQLTDPPY) are disordered. Asn89, Asn413, and Asn422 each carry an N-linked (GlcNAc...) asparagine glycan.

This sequence belongs to the glycosyltransferase 34 family.

The protein resides in the golgi apparatus membrane. Probable glycosyltransferase that may be involved in the biosynthesis of xyloglucan. This chain is Probable glycosyltransferase 5, found in Oryza sativa subsp. indica (Rice).